A 379-amino-acid chain; its full sequence is tRNA-specific 2-thiouridylase MnmA (379 aa).

ATP is bound by residues 23–30 (AMSGGVDS) and L49. C117 (nucleophile) is an active-site residue. C117 and C214 are disulfide-bonded. Position 141 (G141) interacts with ATP. The segment at 163–165 (RDQ) is interaction with tRNA. The active-site Cysteine persulfide intermediate is C214.

This sequence belongs to the MnmA/TRMU family.

It is found in the cytoplasm. It catalyses the reaction S-sulfanyl-L-cysteinyl-[protein] + uridine(34) in tRNA + AH2 + ATP = 2-thiouridine(34) in tRNA + L-cysteinyl-[protein] + A + AMP + diphosphate + H(+). Catalyzes the 2-thiolation of uridine at the wobble position (U34) of tRNA, leading to the formation of s(2)U34. The polypeptide is tRNA-specific 2-thiouridylase MnmA (Cereibacter sphaeroides (strain KD131 / KCTC 12085) (Rhodobacter sphaeroides)).